The chain runs to 260 residues: MSLTKIKHINKPRHIAIIMDGNGRWAKNRGKLRIFGHKAGVESAKKAIKFAINNHLNALTLYAFSSENWKRPIQEVSDLMELFSSVLNNAIDSFKKNNIRLKIIGDISKFNLKLQKYIKKSEKITYKNNGLNLNIAANYGGRWDIIQGVKKIAKQVKKGIIYPDQINESNFCRFICMNELVPVDLVIRTGGEHRISNFLLWQIAYSELFFTDVLWPDFDHVIFSNAINSFAKRERRFGKINSKCSKIYLKTGDASENSIN.

Asp20 is an active-site residue. Mg(2+) is bound at residue Asp20. Substrate-binding positions include 21–24 (GNGR), Trp25, Arg33, His37, and 65–67 (SSE). Catalysis depends on Asn68, which acts as the Proton acceptor. 3 residues coordinate substrate: Trp69, Arg71, and Arg188. Position 193 (His193) interacts with Mg(2+). Position 194 to 196 (194 to 196 (RIS)) interacts with substrate. Glu207 provides a ligand contact to Mg(2+).

Belongs to the UPP synthase family. Homodimer. Mg(2+) serves as cofactor.

The enzyme catalyses 8 isopentenyl diphosphate + (2E,6E)-farnesyl diphosphate = di-trans,octa-cis-undecaprenyl diphosphate + 8 diphosphate. Functionally, catalyzes the sequential condensation of isopentenyl diphosphate (IPP) with (2E,6E)-farnesyl diphosphate (E,E-FPP) to yield (2Z,6Z,10Z,14Z,18Z,22Z,26Z,30Z,34E,38E)-undecaprenyl diphosphate (di-trans,octa-cis-UPP). UPP is the precursor of glycosyl carrier lipid in the biosynthesis of bacterial cell wall polysaccharide components such as peptidoglycan and lipopolysaccharide. The polypeptide is Ditrans,polycis-undecaprenyl-diphosphate synthase ((2E,6E)-farnesyl-diphosphate specific) (Wigglesworthia glossinidia brevipalpis).